We begin with the raw amino-acid sequence, 391 residues long: Phosphoglycerate kinase (391 aa).

Residues Asp-21 to Asn-23, Arg-36, His-59 to Arg-62, Arg-113, and Arg-146 contribute to the substrate site. ATP-binding positions include Lys-197, Glu-319, and Gly-345–Thr-348.

The protein belongs to the phosphoglycerate kinase family. Monomer.

Its subcellular location is the cytoplasm. The enzyme catalyses (2R)-3-phosphoglycerate + ATP = (2R)-3-phospho-glyceroyl phosphate + ADP. It functions in the pathway carbohydrate degradation; glycolysis; pyruvate from D-glyceraldehyde 3-phosphate: step 2/5. This is Phosphoglycerate kinase from Shewanella sp. (strain MR-7).